Reading from the N-terminus, the 99-residue chain is MSRKCAVTGKGVQTGNNVSHANNKSRRRWLPNLQETSLLSDTLGRMVRLRLSTNGIRTIEHKGGLDAALLDIPDARLNQDARRVKKQIQKAIEAKKATA.

Residues 1-25 are disordered; that stretch reads MSRKCAVTGKGVQTGNNVSHANNKS. Polar residues predominate over residues 11–22; sequence GVQTGNNVSHAN.

It belongs to the bacterial ribosomal protein bL28 family.

This Rhodospirillum centenum (strain ATCC 51521 / SW) protein is Large ribosomal subunit protein bL28.